The following is a 457-amino-acid chain: MPSEIITLQLGQCGNQIGFEFWKRLCLEHGISPDGVLEDFATDGQDRKDVFFYQADDNHYIPRAVLIDLEPRVINNIMTSPYSKLYNQENVFLSKHGGGAGNNWASGFSQGEKVQEEVFDILDREADGSDSLEGFVLCHSIAGGTGSGMGSYVLERLSERFPKKLIQTYSVFPNQDEISDVVVQPYNSILTLKRLTKCADSVVVLDNTALNRIATERLHIQTPTFTQINNLVSTIMSLSTTTLRYPSYMNNNLIGLTASLIPTPQLHFLMTGYTPLMSDCETKTSVRKTTVLDVMRRLLQPKNMMVSALTDKQSRQCFVSILNIIQGEVDPSQVHKSLQRIRERKLANFIPWGPASIQVALPRSSPYVQSAHKVSGLMMANHTGISSLFKRALAQYDKLRKRNAFLDNFRRESMFQDDLTELDIARDTVDCLVQEYEAATQIDYPQWSPAVEASKAG.

Residue 142–148 (AGGTGSG) coordinates GTP.

The protein belongs to the tubulin family. As to quaternary structure, interacts with Ote. Expressed in nurse cells and oocytes of developing egg chambers.

Its subcellular location is the cytoplasm. The protein localises to the cytoskeleton. It localises to the microtubule organizing center. The protein resides in the centrosome. It is found in the spindle. Its function is as follows. Tubulin is the major constituent of microtubules. The gamma chain is found at microtubule organizing centers (MTOC) such as the spindle poles or the centrosome, suggesting that it is involved in the minus-end nucleation of microtubule assembly. Required for oocyte activation and consequently for organization of the female meiotic spindle. Essential for centrosome organization and assembly of biastral mitotic spindles in embryos. Plays a role in stabilizing the augmin complex on the meiotic spindle. The protein is Tubulin gamma-2 chain (gammaTub37C) of Drosophila melanogaster (Fruit fly).